We begin with the raw amino-acid sequence, 152 residues long: Cytochrome c-type biogenesis protein CcmE 2 (152 aa).

At 1–8 (MNPQRRRR) the chain is on the cytoplasmic side. The helical; Signal-anchor for type II membrane protein transmembrane segment at 9–29 (LWLVLALVLAGGLATTLVAMA) threads the bilayer. At 30-152 (LQRNVAYLYT…HQVAPAKVTQ (123 aa)) the chain is on the periplasmic side. Positions 123 and 127 each coordinate heme.

Belongs to the CcmE/CycJ family.

It localises to the cell inner membrane. Its function is as follows. Heme chaperone required for the biogenesis of c-type cytochromes. Transiently binds heme delivered by CcmC and transfers the heme to apo-cytochromes in a process facilitated by CcmF and CcmH. The chain is Cytochrome c-type biogenesis protein CcmE 2 from Xanthomonas campestris pv. campestris (strain 8004).